A 262-amino-acid polypeptide reads, in one-letter code: T-cell surface glycoprotein YE1/48 (262 aa).

Topologically, residues 1 to 44 (MSEQEVTYSMVRFHKSAGLQKQVRPEETKGPREAGYRRCSFHWK) are cytoplasmic. A helical; Signal-anchor for type II membrane protein transmembrane segment spans residues 45-66 (FIVIALGIFCFLLLVAVSVLAI). Topologically, residues 67-262 (KIFQYDQQKN…CGKRLDKFPH (196 aa)) are extracellular. N-linked (GlcNAc...) asparagine glycans are attached at residues asparagine 86, asparagine 103, and asparagine 123. A Cell attachment site motif is present at residues 137–139 (RGD). The C-type lectin domain occupies 138–257 (GDKVYWFCYG…VFICICGKRL (120 aa)). 4 cysteine pairs are disulfide-bonded: cysteine 145–cysteine 150, cysteine 163–cysteine 251, cysteine 167–cysteine 253, and cysteine 232–cysteine 245.

As to quaternary structure, homodimer; disulfide-linked. High, in T-lymphoma lines, very low in normal lymphocytes.

The protein localises to the membrane. In terms of biological role, receptor on natural killer (NK) cells for H-2d alleles. Inhibits the activity of NK cells thus preventing cell lysis. The sequence is that of T-cell surface glycoprotein YE1/48 (Klra1) from Mus musculus (Mouse).